The primary structure comprises 509 residues: Dihydrolipoyl dehydrogenase, mitochondrial (509 aa).

The transit peptide at 1–35 directs the protein to the mitochondrion; sequence MQSWSRVYCSLAKRGHFNRISHGLQGLSAVPLRTY. Position 66 is an N6-acetyllysine; alternate (Lys66). Lys66 carries the post-translational modification N6-succinyllysine; alternate. FAD-binding positions include 71 to 80 and Lys89; that span reads EKNETLGGTC. Cys80 and Cys85 are disulfide-bonded. An N6-acetyllysine; alternate mark is found at Lys104, Lys122, Lys132, and Lys143. N6-succinyllysine; alternate is present on residues Lys104, Lys122, Lys132, and Lys143. Gly154 provides a ligand contact to FAD. Residues Lys159 and Lys166 each carry the N6-succinyllysine modification. FAD is bound at residue 183–185; the sequence is TGS. NAD(+) contacts are provided by residues 220-227 and Glu243; that span reads GAGVIGVE. 2 positions are modified to N6-succinyllysine: Lys273 and Lys277. Val278 is a binding site for NAD(+). A phosphoserine mark is found at Ser285 and Ser297. An NAD(+)-binding site is contributed by Gly314. Lys346 carries the post-translational modification N6-acetyllysine. FAD is bound by residues Asp355 and 361 to 364; that span reads MLAH. Lys410 is modified (N6-acetyllysine; alternate). Lys410 is subject to N6-succinyllysine; alternate. N6-acetyllysine is present on residues Lys417 and Lys420. Lys430 is subject to N6-succinyllysine. His487 (proton acceptor) is an active-site residue. Ser502 bears the Phosphoserine mark. The residue at position 505 (Lys505) is an N6-acetyllysine; alternate. Residue Lys505 is modified to N6-succinyllysine; alternate.

It belongs to the class-I pyridine nucleotide-disulfide oxidoreductase family. As to quaternary structure, homodimer. Part of the multimeric pyruvate dehydrogenase complex that contains multiple copies of pyruvate dehydrogenase (subunits PDHA (PDHA1 or PDHA2) and PDHB, E1), dihydrolipoamide acetyltransferase (DLAT, E2) and lipoamide dehydrogenase (DLD, E3). These subunits are bound to an inner core composed of about 48 DLAT and 12 PDHX molecules (by non covalent bonds). The 2-oxoglutarate dehydrogenase complex is composed of OGDH (2-oxoglutarate dehydrogenase; E1), DLST (dihydrolipoamide succinyltransferase; E2), DLD (dihydrolipoamide dehydrogenase; E3) and the assembly factor KGD4. It contains multiple copies of the three enzymatic components (E1, E2 and E3). In the nucleus, the 2-oxoglutarate dehydrogenase complex associates with KAT2A. Interacts with PDHX. It depends on FAD as a cofactor. Tyrosine phosphorylated.

The protein resides in the mitochondrion matrix. It localises to the nucleus. The protein localises to the cell projection. It is found in the cilium. Its subcellular location is the flagellum. The protein resides in the cytoplasmic vesicle. It localises to the secretory vesicle. The protein localises to the acrosome. The enzyme catalyses N(6)-[(R)-dihydrolipoyl]-L-lysyl-[protein] + NAD(+) = N(6)-[(R)-lipoyl]-L-lysyl-[protein] + NADH + H(+). Lipoamide dehydrogenase is a component of the glycine cleavage system as well as an E3 component of three alpha-ketoacid dehydrogenase complexes (pyruvate-, alpha-ketoglutarate-, and branched-chain amino acid-dehydrogenase complex). The 2-oxoglutarate dehydrogenase complex is mainly active in the mitochondrion. A fraction of the 2-oxoglutarate dehydrogenase complex also localizes in the nucleus and is required for lysine succinylation of histones: associates with KAT2A on chromatin and provides succinyl-CoA to histone succinyltransferase KAT2A. In monomeric form may have additional moonlighting function as serine protease. Involved in the hyperactivation of spermatazoa during capacitation and in the spermatazoal acrosome reaction. The protein is Dihydrolipoyl dehydrogenase, mitochondrial (DLD) of Macaca fascicularis (Crab-eating macaque).